The following is a 461-amino-acid chain: Argininosuccinate lyase (461 aa).

It belongs to the lyase 1 family. Argininosuccinate lyase subfamily.

Its subcellular location is the cytoplasm. It carries out the reaction 2-(N(omega)-L-arginino)succinate = fumarate + L-arginine. The protein operates within amino-acid biosynthesis; L-arginine biosynthesis; L-arginine from L-ornithine and carbamoyl phosphate: step 3/3. The chain is Argininosuccinate lyase from Dehalococcoides mccartyi (strain ATCC BAA-2266 / KCTC 15142 / 195) (Dehalococcoides ethenogenes (strain 195)).